The sequence spans 325 residues: Undecaprenyl-phosphate 4-deoxy-4-formamido-L-arabinose transferase (325 aa).

2 helical membrane passes run 235 to 255 (LSVV…LLMV) and 269 to 291 (VFTL…GLLG).

This sequence belongs to the glycosyltransferase 2 family.

The protein localises to the cell inner membrane. It carries out the reaction UDP-4-deoxy-4-formamido-beta-L-arabinose + di-trans,octa-cis-undecaprenyl phosphate = 4-deoxy-4-formamido-alpha-L-arabinopyranosyl di-trans,octa-cis-undecaprenyl phosphate + UDP. It functions in the pathway glycolipid biosynthesis; 4-amino-4-deoxy-alpha-L-arabinose undecaprenyl phosphate biosynthesis; 4-amino-4-deoxy-alpha-L-arabinose undecaprenyl phosphate from UDP-4-deoxy-4-formamido-beta-L-arabinose and undecaprenyl phosphate: step 1/2. It participates in bacterial outer membrane biogenesis; lipopolysaccharide biosynthesis. Catalyzes the transfer of 4-deoxy-4-formamido-L-arabinose from UDP to undecaprenyl phosphate. The modified arabinose is attached to lipid A and is required for resistance to polymyxin and cationic antimicrobial peptides. Essential for virulence in insects. The protein is Undecaprenyl-phosphate 4-deoxy-4-formamido-L-arabinose transferase of Photorhabdus laumondii subsp. laumondii (strain DSM 15139 / CIP 105565 / TT01) (Photorhabdus luminescens subsp. laumondii).